Reading from the N-terminus, the 188-residue chain is Early nodulin-like protein 5 (188 aa).

The N-terminal stretch at 1–24 (MDSSKKIIIVMFLVTFYMFSCVSS) is a signal peptide. The region spanning 25–128 (TEFEVGGENG…GQKMIVKVME (104 aa)) is the Phytocyanin domain. Residues cysteine 82 and cysteine 116 are joined by a disulfide bond. The disordered stretch occupies residues 127–157 (METESSTESPPPSSSSSSSSSSSLPASTPKA). Low complexity predominate over residues 129-155 (TESSTESPPPSSSSSSSSSSSLPASTP). Serine 170 carries the GPI-anchor amidated serine lipid modification. A propeptide spans 171–188 (SSGFVVSAVLIVSVFGLV) (removed in mature form).

This sequence belongs to the early nodulin-like (ENODL) family. Mostly expressed in leaves and flowers, and, to a lower extent, in stems.

It localises to the cell membrane. In terms of biological role, may act as a carbohydrate transporter. Mainly required for reproductive functions. This Arabidopsis thaliana (Mouse-ear cress) protein is Early nodulin-like protein 5.